A 351-amino-acid polypeptide reads, in one-letter code: Ion-translocating oxidoreductase complex subunit D (351 aa).

A run of 4 helical transmembrane segments spans residues 18-38 (IMLL…YFFG), 40-60 (GSLI…GAVL), 87-107 (LPPL…IVIA), and 121-141 (PAMV…TSWL). FMN phosphoryl threonine is present on Thr185. The next 5 membrane-spanning stretches (helical) occupy residues 211–231 (VLAG…GLLL), 241–261 (IPVS…MIAP), 264–284 (FASP…FFIA), 298–318 (LIFG…GGYP), and 320–340 (GVAF…HYTQ).

The protein belongs to the NqrB/RnfD family. As to quaternary structure, the complex is composed of six subunits: RnfA, RnfB, RnfC, RnfD, RnfE and RnfG. FMN serves as cofactor.

The protein resides in the cell inner membrane. In terms of biological role, part of a membrane-bound complex that couples electron transfer with translocation of ions across the membrane. This is Ion-translocating oxidoreductase complex subunit D from Yersinia pseudotuberculosis serotype O:1b (strain IP 31758).